Here is a 51-residue protein sequence, read N- to C-terminus: MLSAKGVSLGLGLGLGAWGPVLLGVVGVAGALALYGYYKNRNAEPAAAEAV.

Topologically, residues 1 to 8 (MLSAKGVS) are lumenal. An LG region region spans residues 9-16 (LGLGLGLG). A helical transmembrane segment spans residues 9–29 (LGLGLGLGAWGPVLLGVVGVA). At 30 to 51 (GALALYGYYKNRNAEPAAAEAV) the chain is on the cytoplasmic side.

Belongs to the magnetosome MamD/Mms5 family. In terms of processing, may undergo N-terminal cleavage.

It is found in the magnetosome membrane. Functionally, might be involved in magnetite crystal growth. The protein is Magnetosome protein Mms5 of Magnetospirillum gryphiswaldense (strain DSM 6361 / JCM 21280 / NBRC 15271 / MSR-1).